Consider the following 340-residue polypeptide: Protein HP_1247 (340 aa).

Seems to interact with H.pylori HolB.

Functionally, could be the functional equivalent of DNA polymerase III delta subunit (HolA). This chain is Protein HP_1247, found in Helicobacter pylori (strain ATCC 700392 / 26695) (Campylobacter pylori).